The sequence spans 653 residues: Chromosomal replication initiator protein DnaA (653 aa).

Positions 1–100 (MADVPADLAA…SAGEPPASAS (100 aa)) are domain I, interacts with DnaA modulators. The tract at residues 86–310 (ITVDDSAGEP…PAPATGPGEP (225 aa)) is disordered. The interval 101 to 312 (PAPPRYEEPE…PATGPGEPTA (212 aa)) is domain II. 2 stretches are compositionally biased toward basic and acidic residues: residues 120 to 150 (DPYE…DRHQ) and 221 to 267 (PSYD…RRNI). The segment covering 284 to 310 (GSALPASSGAPGPLAAQPAPATGPGEP) has biased composition (low complexity). The segment at 313–529 (RLNPKYLFDT…GALIRVTAFA (217 aa)) is domain III, AAA+ region. Residues Gly-357, Gly-359, Lys-360, and Thr-361 each coordinate ATP. A domain IV, binds dsDNA region spans residues 530 to 653 (SLNRQPVDLG…TELTNRIKNG (124 aa)).

The protein belongs to the DnaA family. As to quaternary structure, oligomerizes as a right-handed, spiral filament on DNA at oriC.

It is found in the cytoplasm. Its function is as follows. Plays an essential role in the initiation and regulation of chromosomal replication. ATP-DnaA binds to the origin of replication (oriC) to initiate formation of the DNA replication initiation complex once per cell cycle. Binds the DnaA box (a 9 base pair repeat at the origin) and separates the double-stranded (ds)DNA. Forms a right-handed helical filament on oriC DNA; dsDNA binds to the exterior of the filament while single-stranded (ss)DNA is stabiized in the filament's interior. The ATP-DnaA-oriC complex binds and stabilizes one strand of the AT-rich DNA unwinding element (DUE), permitting loading of DNA polymerase. After initiation quickly degrades to an ADP-DnaA complex that is not apt for DNA replication. Binds acidic phospholipids. This is Chromosomal replication initiator protein DnaA from Streptomyces avermitilis (strain ATCC 31267 / DSM 46492 / JCM 5070 / NBRC 14893 / NCIMB 12804 / NRRL 8165 / MA-4680).